The chain runs to 239 residues: Ribosomal RNA small subunit methyltransferase G (239 aa).

S-adenosyl-L-methionine contacts are provided by residues G77, F82, 128–129 (AE), and R147. The tract at residues 215 to 239 (IRKTKSTPKKYPRKPGTPNKSPIEG) is disordered. A compositionally biased stretch (basic residues) spans 216–227 (RKTKSTPKKYPR).

It belongs to the methyltransferase superfamily. RNA methyltransferase RsmG family.

Its subcellular location is the cytoplasm. In terms of biological role, specifically methylates the N7 position of guanine in position 535 of 16S rRNA. This is Ribosomal RNA small subunit methyltransferase G from Bacillus velezensis (strain DSM 23117 / BGSC 10A6 / LMG 26770 / FZB42) (Bacillus amyloliquefaciens subsp. plantarum).